The sequence spans 349 residues: MEVEEGRARVKVEGVFYNPRMRFCRDLDMLVFATMDSKEYFDALSASGIRGIRAALEAGKKAVFNDVSPKAVKVIEENLRENGVSGEVINGDAAAVMRQRAFEHIDIDPFGSPAPFMDSACFSAKRYLSVTATDTAALCGSATNSGLKKYGAFAVKTDVYHEVGLRMLIGFVVREATKYEKALFPLISWVREHYYRVHFKIKKSTAMSAKVYEKMGYLAYCSTCLRKKVLGMGEGAERCECGGKFSLIGPIWLGELKQRDFAEKVAEKAEGKLRAFLEKILAEIDAPTAYSLPALAKIHSLTLPPTDVVVEELKKLGYEASRTHYCGFCVKTDADRDVVVKILRSRKII.

Residues 1–343 (MEVEEGRARV…ADRDVVVKIL (343 aa)) form the Trm1 methyltransferase domain. S-adenosyl-L-methionine is bound by residues Arg-25, Arg-50, Asp-66, Asp-92, and Ala-93.

The protein belongs to the class I-like SAM-binding methyltransferase superfamily. Trm1 family.

It catalyses the reaction guanosine(26) in tRNA + 2 S-adenosyl-L-methionine = N(2)-dimethylguanosine(26) in tRNA + 2 S-adenosyl-L-homocysteine + 2 H(+). Its function is as follows. Dimethylates a single guanine residue at position 26 of a number of tRNAs using S-adenosyl-L-methionine as donor of the methyl groups. This chain is tRNA (guanine(26)-N(2))-dimethyltransferase, found in Archaeoglobus fulgidus (strain ATCC 49558 / DSM 4304 / JCM 9628 / NBRC 100126 / VC-16).